The primary structure comprises 107 residues: Sperm-specific class P protein 32 (107 aa).

The tract at residues 1–20 (MLTIEPPSATFPASGGSSTH) is disordered. Residues 1-107 (MLTIEPPSAT…GDVTILLKTN (107 aa)) enclose the MSP domain.

Expressed at higher level in testis.

The chain is Sperm-specific class P protein 32 (ssp-32) from Caenorhabditis elegans.